We begin with the raw amino-acid sequence, 98 residues long: Defensin-like protein 68 (98 aa).

A signal peptide spans 1 to 19 (MGSSKLLVALTLVVMITIS). Intrachain disulfides connect C38–C88, C42–C65, C51–C86, and C55–C87.

Belongs to the DEFL family.

The protein resides in the secreted. In Arabidopsis thaliana (Mouse-ear cress), this protein is Defensin-like protein 68.